The chain runs to 282 residues: Digeranylgeranylglyceryl phosphate synthase (282 aa).

9 consecutive transmembrane segments (helical) span residues 15–35 (VIGAALGAIMGFLVSSQWYLE), 36–56 (LKGILLSALVVGLIAAGGYVI), 81–100 (VNKAKALSIALFIIGIALSI), 104–121 (IYALVIALVTAIGLIYYA), 131–151 (GNLLVATTTALSIFYGGLAFF), 159–179 (IIIPTLYAFFLTLIREIVKGI), 201–221 (KSWRIAKILLVLLLIISPLPF), 222–242 (FIGFNLIYLILLILVFIPFTI), and 260–280 (YLKISAISGIIAFLLGSLPFF).

Belongs to the UbiA prenyltransferase family. DGGGP synthase subfamily. Mg(2+) serves as cofactor. It depends on Ca(2+) as a cofactor.

It is found in the cell membrane. The enzyme catalyses sn-3-O-(geranylgeranyl)glycerol 1-phosphate + (2E,6E,10E)-geranylgeranyl diphosphate = 2,3-bis-O-(geranylgeranyl)-sn-glycerol 1-phosphate + diphosphate. Its pathway is membrane lipid metabolism; glycerophospholipid metabolism. Its activity is regulated as follows. Inhibited by EDTA in vitro. Its function is as follows. Prenyltransferase that catalyzes the transfer of the geranylgeranyl moiety of geranylgeranyl diphosphate (GGPP) to the C2 hydroxyl of (S)-3-O-geranylgeranylglyceryl phosphate (GGGP). This reaction is the second ether-bond-formation step in the biosynthesis of archaeal membrane lipids. Cannot use other prenyl donors, i.e. farnesyl diphosphate (FPP) and phytyl diphosphate. Moreover, 4-hydroxybenzoate, 1,4-dihydroxy 2-naphthoate, homogentisate, and alpha-glycerophosphate do not function as prenyl acceptor substrates. This chain is Digeranylgeranylglyceryl phosphate synthase (ubiA-2), found in Saccharolobus solfataricus (strain ATCC 35092 / DSM 1617 / JCM 11322 / P2) (Sulfolobus solfataricus).